The primary structure comprises 588 residues: Ribonuclease Y (588 aa).

A helical transmembrane segment spans residues 7–27 (VLLVAVLLLALIVLGAVLVGV). A disordered region spans residues 130-162 (ARRSGEREAAVLATTTREQAAEVERRAARMDDR). Over residues 148–162 (QAAEVERRAARMDDR) the composition is skewed to basic and acidic residues. A KH domain is found at 278 to 359 (VVSVLHLPGD…HRIEEVHDLA (82 aa)). An HD domain is found at 404–497 (VLKHLVETAH…TQASDACSGG (94 aa)).

This sequence belongs to the RNase Y family.

The protein localises to the cell membrane. Functionally, endoribonuclease that initiates mRNA decay. This is Ribonuclease Y from Salinispora arenicola (strain CNS-205).